The primary structure comprises 637 residues: Probable potassium transport system protein Kup (637 aa).

12 helical membrane passes run 24–44 (LAIAAIGVVFGDIGTSPLYAL), 64–84 (VISLLFWAIILVVGIKYLLFV), 113–133 (AGALMALGIFGACMFYGDAVI), 151–171 (PHLSHLVLPITIVILIALFWI), 182–202 (LFGPIMVVWFVVIAALGVYHI), 225–245 (LLQAYVVLGSVVLVLTGAEAL), 261–281 (AYGLVMPSLVLNYFGQGALLI), 290–310 (PFFLLAPEWALLPLVVLSTVA), 351–371 (IYVPVVNWLLLFVILCIVIGF), 381–401 (YGIAVTATMVITTVLACVVMV), 409–429 (LLVGAIIAIFLAIDLGFFGAN), and 433–453 (VAQGGWLPLGIGALLFFLLMT).

It belongs to the HAK/KUP transporter (TC 2.A.72) family.

The protein localises to the cell inner membrane. It carries out the reaction K(+)(in) + H(+)(in) = K(+)(out) + H(+)(out). In terms of biological role, transport of potassium into the cell. Likely operates as a K(+):H(+) symporter. This Burkholderia ambifaria (strain MC40-6) protein is Probable potassium transport system protein Kup.